Reading from the N-terminus, the 72-residue chain is Large ribosomal subunit protein bL28 (72 aa).

The protein belongs to the bacterial ribosomal protein bL28 family.

The protein is Large ribosomal subunit protein bL28 of Chlorobium luteolum (strain DSM 273 / BCRC 81028 / 2530) (Pelodictyon luteolum).